A 745-amino-acid chain; its full sequence is Cytoskeleton-associated protein 2-like (745 aa).

Disordered regions lie at residues 26–305 (KGKL…VNRV), 319–362 (PATE…LGPQ), 422–483 (FPPQ…TYKR), and 608–638 (EAVT…PCPS). Composition is skewed to polar residues over residues 67 to 89 (SKTT…ASQK) and 101 to 136 (GLTS…SRNP). The KEN box signature appears at 183–185 (KEN). The segment covering 192–202 (KPEKPDPELHS) has biased composition (basic and acidic residues). A Glycyl lysine isopeptide (Lys-Gly) (interchain with G-Cter in SUMO1); alternate cross-link involves residue K195. K195 participates in a covalent cross-link: Glycyl lysine isopeptide (Lys-Gly) (interchain with G-Cter in SUMO2); alternate. Composition is skewed to polar residues over residues 205–216 (KPNTGSSNQTQK), 224–233 (LSKSSVTQTA), 242–253 (FIRNTQIRTQAV), and 284–301 (NKTQ…QDIT). Positions 427–442 (HFLNKTAPRTQASTAA) are enriched in polar residues. Residues 459–475 (KKPEGEDRRKQLEEWQK) show a composition bias toward basic and acidic residues. Residues 608 to 624 (EAVTSDTSAAGTNTTSA) show a composition bias toward polar residues. Residue S745 is modified to Phosphoserine.

This sequence belongs to the CKAP2 family. In terms of processing, ubiquitinated by the anaphase promoting complex/cyclosome (APC/C). In terms of tissue distribution, highly expressed in regions of active neurogenesis and neural stem/progenitor cells (NSPCs), both embryonic and adult, not detected in lung, liver, kidney, heart, and skeletal muscle.

Its subcellular location is the cytoplasm. It is found in the cytoskeleton. The protein resides in the spindle pole. Functionally, microtubule-associated protein required for mitotic spindle formation and cell-cycle progression in neural progenitor cells. The protein is Cytoskeleton-associated protein 2-like (Ckap2l) of Mus musculus (Mouse).